Consider the following 211-residue polypeptide: Thiamine-phosphate synthase (211 aa).

Residues 37–41 (QLRIK) and Asn-69 contribute to the 4-amino-2-methyl-5-(diphosphooxymethyl)pyrimidine site. Residues Asp-70 and Asp-89 each contribute to the Mg(2+) site. Position 108 (Ser-108) interacts with 4-amino-2-methyl-5-(diphosphooxymethyl)pyrimidine. 134–136 (TQT) is a 2-[(2R,5Z)-2-carboxy-4-methylthiazol-5(2H)-ylidene]ethyl phosphate binding site. Lys-137 contacts 4-amino-2-methyl-5-(diphosphooxymethyl)pyrimidine. 2-[(2R,5Z)-2-carboxy-4-methylthiazol-5(2H)-ylidene]ethyl phosphate is bound by residues Gly-166 and 186-187 (VS).

It belongs to the thiamine-phosphate synthase family. Mg(2+) is required as a cofactor.

It carries out the reaction 2-[(2R,5Z)-2-carboxy-4-methylthiazol-5(2H)-ylidene]ethyl phosphate + 4-amino-2-methyl-5-(diphosphooxymethyl)pyrimidine + 2 H(+) = thiamine phosphate + CO2 + diphosphate. The catalysed reaction is 2-(2-carboxy-4-methylthiazol-5-yl)ethyl phosphate + 4-amino-2-methyl-5-(diphosphooxymethyl)pyrimidine + 2 H(+) = thiamine phosphate + CO2 + diphosphate. It catalyses the reaction 4-methyl-5-(2-phosphooxyethyl)-thiazole + 4-amino-2-methyl-5-(diphosphooxymethyl)pyrimidine + H(+) = thiamine phosphate + diphosphate. It functions in the pathway cofactor biosynthesis; thiamine diphosphate biosynthesis; thiamine phosphate from 4-amino-2-methyl-5-diphosphomethylpyrimidine and 4-methyl-5-(2-phosphoethyl)-thiazole: step 1/1. Its function is as follows. Condenses 4-methyl-5-(beta-hydroxyethyl)thiazole monophosphate (THZ-P) and 2-methyl-4-amino-5-hydroxymethyl pyrimidine pyrophosphate (HMP-PP) to form thiamine monophosphate (TMP). This is Thiamine-phosphate synthase from Escherichia coli O6:H1 (strain CFT073 / ATCC 700928 / UPEC).